The primary structure comprises 400 residues: MSLLDTLQRGLADLDAQGLRRVRRTADTACDAHMTVDGREIVGFASNDYLGLAAHPALIAAFAEGAQRYGSGSGGSHLLGGHSRAHATLEDELAAFSGGFSDAPRALYFSTGYMANLAAMTALTGKAATIFSDALNHASLIDGMRLSRANVQVYPHADTAALAALLDASDAETKLIVSDTVFSMDGDLAPLAELVALAERHGAWLVVDDAHGFGVLGPQGRGALAAAALRSPNLVYVGTLGKAAGVAGAFVIAHETVIEWMIQRARSYIFTTAAPPAVAHAVSASLKVIAGDEGDARRAHLAALIERTRALLRNTRWQPVDSHTAVQPLVIGSNDATLAAMRSLDAHGLWVPAIRPPTVPVGTSRLRVSLSAAHSFDDLARLEAALIEASEAQAVQKAAA.

R21 contacts substrate. A pyridoxal 5'-phosphate-binding site is contributed by 112 to 113 (GY). H137 lines the substrate pocket. Pyridoxal 5'-phosphate-binding residues include S183, H211, and T239. Position 242 is an N6-(pyridoxal phosphate)lysine (K242). T358 lines the substrate pocket.

This sequence belongs to the class-II pyridoxal-phosphate-dependent aminotransferase family. BioF subfamily. Homodimer. Pyridoxal 5'-phosphate serves as cofactor.

It carries out the reaction 6-carboxyhexanoyl-[ACP] + L-alanine + H(+) = (8S)-8-amino-7-oxononanoate + holo-[ACP] + CO2. The protein operates within cofactor biosynthesis; biotin biosynthesis. In terms of biological role, catalyzes the decarboxylative condensation of pimeloyl-[acyl-carrier protein] and L-alanine to produce 8-amino-7-oxononanoate (AON), [acyl-carrier protein], and carbon dioxide. This is 8-amino-7-oxononanoate synthase from Burkholderia lata (strain ATCC 17760 / DSM 23089 / LMG 22485 / NCIMB 9086 / R18194 / 383).